An 869-amino-acid chain; its full sequence is Probable inorganic carbon transporter subunit DabA (869 aa).

Residues 1 to 32 (MSTATLEQRAKRGEAPRANDAGHCAHPADGAR) form a disordered region. The segment covering 8–17 (QRAKRGEAPR) has biased composition (basic and acidic residues). Residues C376, D378, H555, and C570 each contribute to the Zn(2+) site.

This sequence belongs to the inorganic carbon transporter (TC 9.A.2) DabA family. Forms a complex with DabB. The cofactor is Zn(2+).

It localises to the cell inner membrane. Part of an energy-coupled inorganic carbon pump. The protein is Probable inorganic carbon transporter subunit DabA of Burkholderia multivorans (strain ATCC 17616 / 249).